Here is a 514-residue protein sequence, read N- to C-terminus: Carboxysome shell carbonic anhydrase (514 aa).

Residues 1–144 form an N-terminal domain region; that stretch reads MNTRNTRSKQ…LTAATEQFSR (144 aa). A catalytic domain region spans residues 151-397; sequence DDSASAIGFF…GRYPPNDIGH (247 aa). Cys-173 is a binding site for Zn(2+). The active-site Proton acceptor is Asp-175. The Zn(2+) site is built by His-242 and Cys-253. Residues 398-514 are C-terminal domain; sequence AERYISVGDG…GSPIEEVASA (117 aa).

It belongs to the beta-class carbonic anhydrase family. CsoSCA subfamily. In terms of assembly, homodimer, may form filaments. Zn(2+) is required as a cofactor.

Its subcellular location is the carboxysome. It carries out the reaction hydrogencarbonate + H(+) = CO2 + H2O. Carbonic anhydrase activity is inhibited by ethoxyzolamide, dithiothreitol, cyanide, and divalent metal chelators dipicolinic acid and nitrilotriacetic acid. Functionally, reversible hydration of carbon dioxide. Essential for chemolithotrophic carbon dioxide fixation, supplies CO(2) to RuBisCO (ribulose bisphosphate carboxylase, cbbL-cbbS) in the carboxysome. There are estimated to be 40 CsoSCA dimers per carboxysome. Its function is as follows. Unlike beta-carboxysomes, alpha-carboxysomes (Cb) can form without cargo protein. CsoS2 is essential for Cb formation and is also capable of targeting foreign proteins to the Cb. The Cb shell assembles with the aid of CsoS2; CsoS1A, CsoS1B and CsoS1C form the majority of the shell while CsoS4A and CsoS4B form vertices. CsoS1D forms pseudohexamers that probably control metabolite flux into and out of the shell. This Halothiobacillus neapolitanus (strain ATCC 23641 / c2) (Thiobacillus neapolitanus) protein is Carboxysome shell carbonic anhydrase.